Consider the following 477-residue polypeptide: Histidine--tRNA ligase (477 aa).

It belongs to the class-II aminoacyl-tRNA synthetase family. Homodimer.

It is found in the cytoplasm. It carries out the reaction tRNA(His) + L-histidine + ATP = L-histidyl-tRNA(His) + AMP + diphosphate + H(+). The protein is Histidine--tRNA ligase of Xanthomonas campestris pv. campestris (strain 8004).